The sequence spans 304 residues: uncharacterized protein (304 aa).

Transmembrane regions (helical) follow at residues 9-29 (VFYV…SIHF), 67-87 (IILY…GNMF), 100-120 (AGSI…GIFF), 131-151 (EFYI…INSS), 159-179 (FFLG…QNLI), 189-209 (AVVI…CLAF), 222-242 (IGML…GMLM), 252-272 (ITVF…IGYL), and 278-298 (INIY…LALK). EamA domains follow at residues 13–148 (LLMG…IFVI) and 171–298 (FIQS…LALK).

Belongs to the EamA transporter family.

Its subcellular location is the cell membrane. This is an uncharacterized protein from Haemophilus influenzae (strain ATCC 51907 / DSM 11121 / KW20 / Rd).